Here is a 1146-residue protein sequence, read N- to C-terminus: Reverse gyrase 1 (1146 aa).

Residues 1-38 (MIKAIFDTLCPNCGGEISAERLLKGLPCEKCLPEEVNR) form an RG N-terminal-type zinc finger. 4 residues coordinate Zn(2+): Cys10, Cys13, Cys28, and Cys31. Residues Gln79 and 96-103 (APTGVGKT) each bind ATP. The 158-residue stretch at 83–240 (ARKVFLGRSF…RLKEKPNKSE (158 aa)) folds into the Helicase ATP-binding domain. The short motif at 197–200 (DDVD) is the DEAD box element. One can recognise a Helicase C-terminal domain in the interval 412–565 (HLLWALLSLR…FKKIEEVDLK (154 aa)). Residues 592–1146 (EHVKPVLVVV…KVNEFEKANV (555 aa)) form a topoisomerase I region. In terms of domain architecture, Toprim spans 596–728 (PVLVVVESPN…NVERIEFHEV (133 aa)). Mg(2+)-binding residues include Glu602 and Asp697. In terms of domain architecture, Topo IA-type catalytic spans 744–1142 (NENLVKAQLV…ELYKKVNEFE (399 aa)). The O-(5'-phospho-DNA)-tyrosine intermediate role is filled by Tyr891.

The protein in the N-terminal section; belongs to the DEAD box helicase family. DDVD subfamily. It in the C-terminal section; belongs to the type IA topoisomerase family. Monomer. Requires Zn(2+) as cofactor. Mg(2+) is required as a cofactor.

The protein localises to the cytoplasm. It carries out the reaction ATP + H2O = ADP + phosphate + H(+). Functionally, modifies the topological state of DNA by introducing positive supercoils in an ATP-dependent process, increasing the linking number in steps of +1. Binds to single-stranded DNA, transiently cleaves and then rejoins the ends, introducing a positive supercoil in the process. The scissile phosphodiester is attacked by the catalytic tyrosine of the enzyme, resulting in the formation of a DNA-(5'-phosphotyrosyl)-enzyme intermediate. Probably involved in rewinding DNA strands in regions of the chromosome that have opened up to allow replication, transcription, DNA repair and/or for DNA protection. The sequence is that of Reverse gyrase 1 from Aquifex aeolicus (strain VF5).